Reading from the N-terminus, the 171-residue chain is Cytochrome c oxidase subunit 5b-2, mitochondrial (171 aa).

Residues 1-54 constitute a mitochondrion transit peptide; sequence MWRRIVSSHLKSISAVGSCAAPSCRHAVVESTHLSLSTRASSIPAYSSIFSRLI. Positions 121, 145, and 148 each coordinate Zn(2+).

It belongs to the cytochrome c oxidase subunit 5B (TC 3.D.4.11) family.

The protein localises to the mitochondrion inner membrane. In terms of biological role, this protein is one of the nuclear-coded polypeptide chains of cytochrome c oxidase, the terminal oxidase in mitochondrial electron transport. This chain is Cytochrome c oxidase subunit 5b-2, mitochondrial (COX5B-2), found in Arabidopsis thaliana (Mouse-ear cress).